The sequence spans 287 residues: Nucleotide-binding protein Ajs_0902 (287 aa).

An ATP-binding site is contributed by 10 to 17 (GMSGSGKS). 59-62 (DVRS) is a GTP binding site.

Belongs to the RapZ-like family.

Displays ATPase and GTPase activities. This Acidovorax sp. (strain JS42) protein is Nucleotide-binding protein Ajs_0902.